The primary structure comprises 674 residues: Translation factor GUF1, mitochondrial (674 aa).

The transit peptide at 1-48 (MRGCLQPARWLTTATLRRPLLSCPRQLPTRYNPFPRPFHHAPVLQARQ) directs the protein to the mitochondrion. A tr-type G domain is found at 66–246 (ERYRNFCIVA…AIIESIPALL (181 aa)). GTP is bound by residues 75-82 (AHVDHGKS), 139-143 (DTPGH), and 193-196 (NKVD).

Belongs to the TRAFAC class translation factor GTPase superfamily. Classic translation factor GTPase family. LepA subfamily.

It is found in the mitochondrion inner membrane. The enzyme catalyses GTP + H2O = GDP + phosphate + H(+). Promotes mitochondrial protein synthesis. May act as a fidelity factor of the translation reaction, by catalyzing a one-codon backward translocation of tRNAs on improperly translocated ribosomes. Binds to mitochondrial ribosomes in a GTP-dependent manner. The chain is Translation factor GUF1, mitochondrial from Arthroderma otae (strain ATCC MYA-4605 / CBS 113480) (Microsporum canis).